Here is a 285-residue protein sequence, read N- to C-terminus: Energy-coupling factor transporter ATP-binding protein EcfA1 (285 aa).

Residues 9–246 enclose the ABC transporter domain; that stretch reads VTVEHLSFTY…VSLIKNAGLD (238 aa). 43 to 50 is an ATP binding site; sequence GHNGSGKS.

This sequence belongs to the ABC transporter superfamily. Energy-coupling factor EcfA family. Forms a stable energy-coupling factor (ECF) transporter complex composed of 2 membrane-embedded substrate-binding proteins (S component), 2 ATP-binding proteins (A component) and 2 transmembrane proteins (T component).

It is found in the cell membrane. Functionally, ATP-binding (A) component of a common energy-coupling factor (ECF) ABC-transporter complex. Unlike classic ABC transporters this ECF transporter provides the energy necessary to transport a number of different substrates. This Lactobacillus gasseri (strain ATCC 33323 / DSM 20243 / BCRC 14619 / CIP 102991 / JCM 1131 / KCTC 3163 / NCIMB 11718 / NCTC 13722 / AM63) protein is Energy-coupling factor transporter ATP-binding protein EcfA1.